Consider the following 966-residue polypeptide: Collagen alpha-1(I) chain (966 aa).

Residues 1 to 966 (SYGYDEKSAG…PGPPGPPGPP (966 aa)) are disordered. Lys-7 carries the post-translational modification Allysine. The residue at position 8 (Ser-8) is a Phosphoserine. Residues Pro-27, Pro-30, Pro-32, Pro-41, Pro-44, Pro-47, Pro-61, Pro-76, Pro-82, Pro-91, and Pro-97 each carry the 4-hydroxyproline modification. A compositionally biased stretch (basic and acidic residues) spans 64-78 (NGDDGEAGKPGRPGE). Lys-100 is modified (5-hydroxylysine; alternate). Lys-100 carries an O-linked (Gal...) hydroxylysine; alternate glycan. Ser-106 is modified (phosphoserine). A compositionally biased stretch (low complexity) spans 114-130 (DAGPAGPKGEPGSPGEN). 4-hydroxyproline is present on residues Pro-124, Pro-127, Pro-133, Pro-142, Pro-148, Pro-169, Pro-178, Pro-181, Pro-208, Pro-211, Pro-223, Pro-229, Pro-238, Pro-244, Pro-247, and Pro-262. Residues 148-166 (PGASGPAGARGNDGATGAA) are compositionally biased toward low complexity. Residues 168–180 (PPGPTGPAGPPGF) show a composition bias toward pro residues. A compositionally biased stretch (low complexity) spans 214 to 253 (AGAAGPAGNPGADGQPGAKGANGAPGIAGAPGFPGARGPS). Position 265 is a 5-hydroxylysine (Lys-265). A 4-hydroxyproline mark is found at Pro-271, Pro-274, Pro-286, Pro-295, Pro-310, Pro-316, Pro-325, and Pro-331. Over residues 320-329 (GERGGPGSRG) the composition is skewed to gly residues. Residue Lys-340 is modified to 5-hydroxylysine. Residues Pro-349, Pro-358, Pro-364, Pro-370, Pro-379, Pro-382, Pro-391, Pro-400, Pro-406, Pro-418, Pro-427, Pro-436, Pro-439, Pro-457, Pro-475, Pro-481, Pro-487, Pro-493, Pro-499, Pro-505, Pro-517, Pro-526, Pro-538, Pro-542, Pro-548, Pro-554, and Pro-563 each carry the 4-hydroxyproline modification. Residues 373-399 (KGLTGSPGSPGPDGKTGPPGPAGQDGR) show a composition bias toward low complexity. Residues 408 to 427 (ARGQAGVMGFPGPKGAAGEP) show a composition bias toward low complexity. Over residues 469 to 496 (QGPAGSPGFQGLPGPAGPPGEAGKPGEQ) the composition is skewed to low complexity. The residue at position 575 (Lys-575) is a 5-hydroxylysine. A 4-hydroxyproline mark is found at Pro-581, Pro-596, and Pro-602. Positions 608 to 622 (SGPSGPAGPTGARGA) are enriched in low complexity. At Ser-611 the chain carries Phosphoserine. A 4-hydroxyproline mark is found at Pro-623, Pro-629, Pro-632, Pro-641, Pro-647, Pro-665, Pro-674, and Pro-683. Residues 635–662 (AGFAGPPGADGQPGAKGEPGDAGAKGDA) are compositionally biased toward low complexity. Over residues 664–676 (PPGPAGPTGPPGP) the composition is skewed to pro residues. Lys-686 is subject to 5-hydroxylysine. The span at 691–707 (SAGPPGATGFPGAAGRV) shows a compositional bias: low complexity. A 4-hydroxyproline mark is found at Pro-695 and Pro-701. At Pro-709 the chain carries 3-hydroxyproline. 4-hydroxyproline is present on residues Pro-710, Pro-719, Pro-722, Pro-746, Pro-755, Pro-773, Pro-782, Pro-785, Pro-791, Pro-806, Pro-812, Pro-818, Pro-826, and Pro-832. The span at 736 to 755 (ETGPAGEKGSPGADGPAGAP) shows a compositional bias: low complexity. Pro residues predominate over residues 805 to 815 (PPGPVGPPGLA). Positions 824 to 835 (EGPGAEGSPGRG) are enriched in gly residues. Residues 852–866 (AGPAGARGPAGPQGP) are compositionally biased toward low complexity. The span at 867–881 (RGDKGETGEQGDRGI) shows a compositional bias: basic and acidic residues. Lys-870 is subject to 5-hydroxylysine. Residue Lys-882 is modified to 5-hydroxylysine; alternate. The O-linked (Gal...) hydroxylysine; alternate glycan is linked to Lys-882. A 4-hydroxyproline mark is found at Pro-897, Pro-900, Pro-918, and Pro-933. The segment covering 900–933 (PGEQGPSGASGPAGPRGPPGSAGSPGKDGLNGLP) has biased composition (low complexity). Pro-938 carries the 3-hydroxyproline modification. Pro-939 carries the 4-hydroxyproline modification. Residues 951–966 (VGPPGPPGPPGPPGPP) are compositionally biased toward pro residues. Pro-953 carries the post-translational modification 3-hydroxyproline. Pro-954 is subject to 4-hydroxyproline. At Pro-956 the chain carries 3-hydroxyproline. A 4-hydroxyproline modification is found at Pro-957. Pro-959 is modified (3-hydroxyproline). 4-hydroxyproline occurs at positions 960, 963, and 966.

It belongs to the fibrillar collagen family. In terms of assembly, trimers of one alpha 2(I) and two alpha 1(I) chains. Contains mostly 4-hydroxyproline. Proline residues at the third position of the tripeptide repeating unit (G-X-Y) are hydroxylated in some or all of the chains. In terms of processing, contains 3-hydroxyproline at a few sites. This modification occurs on the first proline residue in the sequence motif Gly-Pro-Hyp, where Hyp is 4-hydroxyproline. Post-translationally, lysine residues at the third position of the tripeptide repeating unit (G-X-Y) are 5-hydroxylated in some or all of the chains. O-glycosylated on hydroxylated lysine residues. The O-linked glycan consists of a Glc-Gal disaccharide. As to expression, expressed in bones.

The protein resides in the secreted. The protein localises to the extracellular space. Its subcellular location is the extracellular matrix. Functionally, type I collagen is a member of group I collagen (fibrillar forming collagen). The protein is Collagen alpha-1(I) chain of Bradypus variegatus (Brown-throated three-fingered sloth).